The sequence spans 599 residues: mRNA export factor MEX67 (599 aa).

S2 is modified (N-acetylserine). LRR repeat units follow at residues 163–184 (IVESVNLADNQLKDISAISTLA) and 189–210 (NLKNLCLANNQIFRFRSLEVWK). Positions 224-262 (NPITTDKLYRTEMLRLFPKLVVLDNVIVRDEQKLQTVYS) constitute an LRRCT domain. The NTF2 domain maps to 280 to 467 (SSTDFATNFL…VIIASDLLTV (188 aa)). Positions 408–439 (KPELESNKKTGKNNYQKNRRYNHGYNSTSNNK) are disordered. The region spanning 546-599 (PVQLELLNKLHLETKLNAEYTFMLAEQSNWNYEVAIKGFQSSMNGIPREAFVQF) is the TAP-C domain.

It belongs to the NXF family. In terms of assembly, interacts with nucleoporin complex NUP84 and MTR2. Interacts with MIP6.

Its subcellular location is the nucleus. The protein localises to the cytoplasm. Functionally, involved in the export of mRNA from the nucleus to the cytoplasm. This is mRNA export factor MEX67 (MEX67) from Saccharomyces cerevisiae (strain ATCC 204508 / S288c) (Baker's yeast).